The chain runs to 405 residues: L-carnitine CoA-transferase (405 aa).

2 residues coordinate CoA: K97 and R104. D169 functions as the Nucleophile in the catalytic mechanism.

Belongs to the CoA-transferase III family. CaiB subfamily. As to quaternary structure, homodimer.

The protein localises to the cytoplasm. It carries out the reaction crotonobetainyl-CoA + (R)-carnitine = crotonobetaine + (R)-carnitinyl-CoA. The catalysed reaction is 4-(trimethylamino)butanoyl-CoA + (R)-carnitine = (R)-carnitinyl-CoA + 4-(trimethylamino)butanoate. It participates in amine and polyamine metabolism; carnitine metabolism. Its function is as follows. Catalyzes the reversible transfer of the CoA moiety from gamma-butyrobetainyl-CoA to L-carnitine to generate L-carnitinyl-CoA and gamma-butyrobetaine. Is also able to catalyze the reversible transfer of the CoA moiety from gamma-butyrobetainyl-CoA or L-carnitinyl-CoA to crotonobetaine to generate crotonobetainyl-CoA. This chain is L-carnitine CoA-transferase, found in Escherichia coli O127:H6 (strain E2348/69 / EPEC).